A 399-amino-acid chain; its full sequence is Enoyl-[acyl-carrier-protein] reductase [NADH] (399 aa).

Residues 48–53 (GASTGY), 74–75 (FE), 111–112 (DA), and 139–140 (LA) contribute to the NAD(+) site. Residue Tyr225 coordinates substrate. Tyr235 functions as the Proton donor in the catalytic mechanism. NAD(+)-binding positions include Lys244 and 274–276 (VVT).

This sequence belongs to the TER reductase family. In terms of assembly, monomer.

The catalysed reaction is a 2,3-saturated acyl-[ACP] + NAD(+) = a (2E)-enoyl-[ACP] + NADH + H(+). It functions in the pathway lipid metabolism; fatty acid biosynthesis. Its function is as follows. Involved in the final reduction of the elongation cycle of fatty acid synthesis (FAS II). Catalyzes the reduction of a carbon-carbon double bond in an enoyl moiety that is covalently linked to an acyl carrier protein (ACP). The chain is Enoyl-[acyl-carrier-protein] reductase [NADH] from Yersinia enterocolitica serotype O:8 / biotype 1B (strain NCTC 13174 / 8081).